We begin with the raw amino-acid sequence, 331 residues long: Ketol-acid reductoisomerase (NADP(+)) (331 aa).

The region spanning 2 to 182 (AKLFYDSDAD…GGTRAGILET (181 aa)) is the KARI N-terminal Rossmann domain. NADP(+) is bound by residues 25–28 (YGSQ), S51, S53, and 83–86 (DEFQ). H108 is an active-site residue. An NADP(+)-binding site is contributed by G134. One can recognise a KARI C-terminal knotted domain in the interval 183–328 (NFKEETETDL…KTLRSMFSWL (146 aa)). D191, E195, E227, and E231 together coordinate Mg(2+). Residue S252 participates in substrate binding.

It belongs to the ketol-acid reductoisomerase family. The cofactor is Mg(2+).

The catalysed reaction is (2R)-2,3-dihydroxy-3-methylbutanoate + NADP(+) = (2S)-2-acetolactate + NADPH + H(+). It carries out the reaction (2R,3R)-2,3-dihydroxy-3-methylpentanoate + NADP(+) = (S)-2-ethyl-2-hydroxy-3-oxobutanoate + NADPH + H(+). Its pathway is amino-acid biosynthesis; L-isoleucine biosynthesis; L-isoleucine from 2-oxobutanoate: step 2/4. It functions in the pathway amino-acid biosynthesis; L-valine biosynthesis; L-valine from pyruvate: step 2/4. Involved in the biosynthesis of branched-chain amino acids (BCAA). Catalyzes an alkyl-migration followed by a ketol-acid reduction of (S)-2-acetolactate (S2AL) to yield (R)-2,3-dihydroxy-isovalerate. In the isomerase reaction, S2AL is rearranged via a Mg-dependent methyl migration to produce 3-hydroxy-3-methyl-2-ketobutyrate (HMKB). In the reductase reaction, this 2-ketoacid undergoes a metal-dependent reduction by NADPH to yield (R)-2,3-dihydroxy-isovalerate. In Prochlorococcus marinus (strain NATL2A), this protein is Ketol-acid reductoisomerase (NADP(+)).